The primary structure comprises 264 residues: Thymidylate synthase (264 aa).

Arg-21 contributes to the dUMP binding site. A (6R)-5,10-methylene-5,6,7,8-tetrahydrofolate-binding site is contributed by His-51. DUMP is bound at residue Arg-126–Arg-127. Cys-146 serves as the catalytic Nucleophile. DUMP contacts are provided by residues Arg-166 to Asp-169, Asn-177, and His-207 to Tyr-209. Residue Asp-169 coordinates (6R)-5,10-methylene-5,6,7,8-tetrahydrofolate. Ser-263 provides a ligand contact to (6R)-5,10-methylene-5,6,7,8-tetrahydrofolate.

Belongs to the thymidylate synthase family. Bacterial-type ThyA subfamily. In terms of assembly, homodimer.

The protein resides in the cytoplasm. It catalyses the reaction dUMP + (6R)-5,10-methylene-5,6,7,8-tetrahydrofolate = 7,8-dihydrofolate + dTMP. The protein operates within pyrimidine metabolism; dTTP biosynthesis. Its function is as follows. Catalyzes the reductive methylation of 2'-deoxyuridine-5'-monophosphate (dUMP) to 2'-deoxythymidine-5'-monophosphate (dTMP) while utilizing 5,10-methylenetetrahydrofolate (mTHF) as the methyl donor and reductant in the reaction, yielding dihydrofolate (DHF) as a by-product. This enzymatic reaction provides an intracellular de novo source of dTMP, an essential precursor for DNA biosynthesis. The polypeptide is Thymidylate synthase (Neisseria meningitidis serogroup B (strain ATCC BAA-335 / MC58)).